We begin with the raw amino-acid sequence, 410 residues long: Arginine deiminase (410 aa).

The active-site Amidino-cysteine intermediate is Cys399.

Belongs to the arginine deiminase family.

The protein resides in the cytoplasm. The enzyme catalyses L-arginine + H2O = L-citrulline + NH4(+). The protein operates within amino-acid degradation; L-arginine degradation via ADI pathway; carbamoyl phosphate from L-arginine: step 1/2. In Listeria monocytogenes serotype 4b (strain F2365), this protein is Arginine deiminase.